The following is a 375-amino-acid chain: Mitogen-activated protein kinase 4a (375 aa).

Residues 39–325 (KPPLRPIGRG…VEAALAHPYL (287 aa)) enclose the Protein kinase domain. ATP is bound by residues 45–53 (IGRGAYGIV) and K68. D165 (proton acceptor) is an active-site residue. T197 is subject to Phosphothreonine. The short motif at 197–199 (TEY) is the TXY element. Residue Y199 is modified to Phosphotyrosine.

Belongs to the protein kinase superfamily. CMGC Ser/Thr protein kinase family. MAP kinase subfamily. The cofactor is Mg(2+). Dually phosphorylated on Thr-197 and Tyr-199, which activates the enzyme. Phosphorylated in response to pathogen-associated molecular pattern (PAMP) chitin and in response to necrotrophic fungus B.cinerea spores. Not phosphorylated in response to osmotic stress. Expressed strongly in the apical cells of caulonemal air filaments and rhizoids in fully developed plants and less strongly, but readily detectable in filamentous protonemal tissue at the edge of the plant consisting of both chloronema and caulonema. When filamentous growth of protonema is promoted, the expression is strongest in newly formed apical tip cells of protonemal tissue.

It is found in the cytoplasm. The protein localises to the nucleus. It catalyses the reaction L-seryl-[protein] + ATP = O-phospho-L-seryl-[protein] + ADP + H(+). The enzyme catalyses L-threonyl-[protein] + ATP = O-phospho-L-threonyl-[protein] + ADP + H(+). Activated by threonine and tyrosine phosphorylation. Activated in response to bacterial and fungal pathogen-associated molecular patterns (PAMPs) including chitin, chitosan and peptidyl glycans (PGNs). Activation in response to chitin requires the CERK1, MEKK1a/b, MKK1a/b/c and MPK4a/b signaling pathway. Activated in response to necrotrophic fungus B.cinerea spores. Not activated in response to osmotic stress. The CERK1, MEKK1a/b, MKK1a/b/c and MPK4a/b proteins are involved in pathogen defense. The pathway induces rapid growth inhibition, cell wall depositions and accumulation of defense-related transcripts. This protein is required for innate immunity triggered by pathogen-associated molecular patterns (PAMPs). Involved in resistance to necrotrophic fungi B.cinerea and A.brassicicola. Involved in the transduction of signals from chitosan perception to the activation of defense genes. The sequence is that of Mitogen-activated protein kinase 4a (MPK4a) from Physcomitrium patens (Spreading-leaved earth moss).